The primary structure comprises 317 residues: Glycine--tRNA ligase alpha subunit (317 aa).

It belongs to the class-II aminoacyl-tRNA synthetase family. As to quaternary structure, tetramer of two alpha and two beta subunits.

It localises to the cytoplasm. The enzyme catalyses tRNA(Gly) + glycine + ATP = glycyl-tRNA(Gly) + AMP + diphosphate. The polypeptide is Glycine--tRNA ligase alpha subunit (Pseudomonas fluorescens (strain SBW25)).